The sequence spans 100 residues: uncharacterized protein (100 aa).

This is an uncharacterized protein from Clostridium tetanomorphum.